We begin with the raw amino-acid sequence, 141 residues long: Hemoglobin subunit alpha-A (141 aa).

The 141-residue stretch at 1–141 (VLSAADKNNV…VGNVLTAKYR (141 aa)) folds into the Globin domain. Residue H58 coordinates O2. H87 contributes to the heme b binding site.

It belongs to the globin family. Heterotetramer of two alpha chains and two beta chains. As to expression, red blood cells.

Its function is as follows. Involved in oxygen transport from the lung to the various peripheral tissues. The sequence is that of Hemoglobin subunit alpha-A (HBAA) from Francolinus pondicerianus (Grey francolin).